The sequence spans 218 residues: Ribonuclease HII (218 aa).

In terms of domain architecture, RNase H type-2 spans 12-206 (GRVAGVDEVG…VREALARSAL (195 aa)). Positions 18, 19, and 115 each coordinate a divalent metal cation.

This sequence belongs to the RNase HII family. Requires Mn(2+) as cofactor. The cofactor is Mg(2+).

Its subcellular location is the cytoplasm. It carries out the reaction Endonucleolytic cleavage to 5'-phosphomonoester.. Its function is as follows. Endonuclease that specifically degrades the RNA of RNA-DNA hybrids. This is Ribonuclease HII from Rhodospirillum rubrum (strain ATCC 11170 / ATH 1.1.1 / DSM 467 / LMG 4362 / NCIMB 8255 / S1).